Here is a 478-residue protein sequence, read N- to C-terminus: Transposase for insertion sequence element IS231B (478 aa).

It belongs to the transposase 11 family.

In terms of biological role, involved in the transposition of the insertion sequence. The polypeptide is Transposase for insertion sequence element IS231B (Bacillus thuringiensis subsp. berliner).